Consider the following 90-residue polypeptide: Heat shock protein beta-7 (90 aa).

A sHSP domain is found at 39 to 90; that stretch reads PLTFPARPGGQGNIKTLGDAYEFTVDMRDFSPEDIIVTTSNNHIEVRAEKKP.

Belongs to the small heat shock protein (HSP20) family. Interacts with C-terminal domain of actin-binding protein 280. Found in both cardiac and skeletal muscle.

It localises to the cytoplasm. The protein localises to the nucleus. Its subcellular location is the cajal body. This Rattus norvegicus (Rat) protein is Heat shock protein beta-7 (Hspb7).